The following is a 307-amino-acid chain: N-acetylmuramic acid 6-phosphate etherase (307 aa).

Positions 62–225 (IVSSFNRGGR…STASMIRIGK (164 aa)) constitute an SIS domain. Residue glutamate 90 is the Proton donor of the active site. Glutamate 121 is an active-site residue.

The protein belongs to the GCKR-like family. MurNAc-6-P etherase subfamily. Homodimer.

The enzyme catalyses N-acetyl-D-muramate 6-phosphate + H2O = N-acetyl-D-glucosamine 6-phosphate + (R)-lactate. The protein operates within amino-sugar metabolism; 1,6-anhydro-N-acetylmuramate degradation. Its pathway is amino-sugar metabolism; N-acetylmuramate degradation. It participates in cell wall biogenesis; peptidoglycan recycling. Functionally, specifically catalyzes the cleavage of the D-lactyl ether substituent of MurNAc 6-phosphate, producing GlcNAc 6-phosphate and D-lactate. Together with AnmK, is also required for the utilization of anhydro-N-acetylmuramic acid (anhMurNAc) either imported from the medium or derived from its own cell wall murein, and thus plays a role in cell wall recycling. The polypeptide is N-acetylmuramic acid 6-phosphate etherase (Pseudoalteromonas atlantica (strain T6c / ATCC BAA-1087)).